The primary structure comprises 1588 residues: Ubiquitin carboxyl-terminal hydrolase 54 (1588 aa).

Position 12 is an omega-N-methylarginine (arginine 12). A USP domain is found at lysine 31–proline 352. The Nucleophile role is filled by cysteine 42. Zn(2+)-binding residues include histidine 67, cysteine 69, cysteine 74, cysteine 77, histidine 133, cysteine 145, cysteine 150, histidine 153, cysteine 166, cysteine 169, cysteine 225, and cysteine 229. Histidine 302 acts as the Proton acceptor in catalysis. Basic and acidic residues-rich tracts occupy residues glycine 382–glutamine 391 and serine 424–alanine 434. Disordered stretches follow at residues glycine 382 to arginine 519, phenylalanine 555 to histidine 577, and glutamate 601 to serine 624. Serine 424 is subject to Phosphoserine. Residues threonine 453 to glycine 471 show a composition bias toward polar residues. Positions threonine 499 to lysine 513 are enriched in low complexity. Residues phenylalanine 555–glycine 572 show a composition bias toward basic and acidic residues. Positions glutamate 601–serine 616 are enriched in low complexity. Residues serine 613 and serine 616 each carry the phosphoserine modification. A coiled-coil region spans residues glutamate 682–glycine 712. Disordered regions lie at residues arginine 801–threonine 834, glutamine 1089–tyrosine 1182, serine 1221–arginine 1242, and tryptophan 1491–glycine 1561. Low complexity predominate over residues glutamine 808–glutamine 826. The segment covering glycine 1126–cysteine 1147 has biased composition (basic and acidic residues). Serine 1138 bears the Phosphoserine mark. Over residues proline 1510 to serine 1524 the composition is skewed to polar residues. Basic and acidic residues predominate over residues arginine 1536–arginine 1547.

It belongs to the peptidase C19 family.

The enzyme catalyses Thiol-dependent hydrolysis of ester, thioester, amide, peptide and isopeptide bonds formed by the C-terminal Gly of ubiquitin (a 76-residue protein attached to proteins as an intracellular targeting signal).. Deubiquitinase that specifically mediates 'Lys-63'-linked deubiquitination of substrates with a polyubiquitin chain composed of at least 3 ubiquitins. Specifically recognizes ubiquitin chain in position S2 and catalyzes cleavage of polyubiquitin within 'Lys-63'-linked chains. Not able to deubiquitinate substrates with shorter ubiquitin chains. Mediates deubiquitination of PLK4, maintaining PLK4 stability by reducing its ubiquitination-mediated degradation. The chain is Ubiquitin carboxyl-terminal hydrolase 54 (Usp54) from Mus musculus (Mouse).